The chain runs to 180 residues: Stathmin-3 (180 aa).

S-palmitoyl cysteine attachment occurs at residues cysteine 22 and cysteine 24. Positions 38–180 (GDMEVKQLDK…NKEQREEMSG (143 aa)) constitute an SLD domain. Phosphoserine is present on residues serine 50, serine 60, serine 65, serine 68, serine 72, serine 73, and serine 81. Positions 58–81 (LKSPSDLSPESPVLSSPPKRKDAS) are disordered. Residues 60–74 (SPSDLSPESPVLSSP) are compositionally biased toward low complexity. Residues 75-179 (PKRKDASLEE…RNKEQREEMS (105 aa)) adopt a coiled-coil conformation.

It belongs to the stathmin family. As to quaternary structure, interacts with STAT3. Interacts with CLU (secreted form); this interaction may act as an important modulator during neuronal differentiation. Post-translationally, N-terminal palmitoylation promotes specific anchoring to the cytosolic leaflet of Golgi membranes and subsequent vesicular trafficking along dendrites and axons. Neuronal Stathmins are substrates for palmitoyltransferases ZDHHC3, ZDHHC7 and ZDHHC15. In terms of tissue distribution, neuron specific.

Its subcellular location is the golgi apparatus. It is found in the cell projection. The protein localises to the growth cone. It localises to the axon. The protein resides in the cytoplasm. Its subcellular location is the cytosol. In terms of biological role, exhibits microtubule-destabilizing activity, which is antagonized by STAT3. This is Stathmin-3 (Stmn3) from Rattus norvegicus (Rat).